Here is a 324-residue protein sequence, read N- to C-terminus: Methionyl-tRNA formyltransferase (324 aa).

114–117 contributes to the (6S)-5,6,7,8-tetrahydrofolate binding site; the sequence is SLLP.

Belongs to the Fmt family.

It carries out the reaction L-methionyl-tRNA(fMet) + (6R)-10-formyltetrahydrofolate = N-formyl-L-methionyl-tRNA(fMet) + (6S)-5,6,7,8-tetrahydrofolate + H(+). In terms of biological role, attaches a formyl group to the free amino group of methionyl-tRNA(fMet). The formyl group appears to play a dual role in the initiator identity of N-formylmethionyl-tRNA by promoting its recognition by IF2 and preventing the misappropriation of this tRNA by the elongation apparatus. This chain is Methionyl-tRNA formyltransferase, found in Phocaeicola vulgatus (strain ATCC 8482 / DSM 1447 / JCM 5826 / CCUG 4940 / NBRC 14291 / NCTC 11154) (Bacteroides vulgatus).